A 598-amino-acid polypeptide reads, in one-letter code: Elongation factor 4 (598 aa).

Positions 4–181 (SKIRNFSIIA…AVIEKIPAPK (178 aa)) constitute a tr-type G domain. GTP is bound by residues 16–21 (DHGKST) and 128–131 (NKID).

It belongs to the TRAFAC class translation factor GTPase superfamily. Classic translation factor GTPase family. LepA subfamily.

It localises to the cell membrane. The catalysed reaction is GTP + H2O = GDP + phosphate + H(+). Required for accurate and efficient protein synthesis under certain stress conditions. May act as a fidelity factor of the translation reaction, by catalyzing a one-codon backward translocation of tRNAs on improperly translocated ribosomes. Back-translocation proceeds from a post-translocation (POST) complex to a pre-translocation (PRE) complex, thus giving elongation factor G a second chance to translocate the tRNAs correctly. Binds to ribosomes in a GTP-dependent manner. The protein is Elongation factor 4 of Mycoplasma mobile (strain ATCC 43663 / 163K / NCTC 11711) (Mesomycoplasma mobile).